The following is a 231-amino-acid chain: Aquaporin Z (231 aa).

2 helical membrane-spanning segments follow: residues 9–29 (CFGT…AAGF) and 34–54 (IGFA…AFAV). An NPA 1 motif is present at residues 63 to 65 (NPA). 3 helical membrane passes run 82–102 (VGYV…LYLI), 129–149 (YSML…LLVI), and 156–176 (FAPA…IHLI). The short motif at 186-188 (NPA) is the NPA 2 element. Residues 202-222 (LEQLWFFWVVPIVGGIIGGLI) form a helical membrane-spanning segment.

The protein belongs to the MIP/aquaporin (TC 1.A.8) family. Homotetramer.

The protein localises to the cell inner membrane. The catalysed reaction is H2O(in) = H2O(out). Functionally, channel that permits osmotically driven movement of water in both directions. It is involved in the osmoregulation and in the maintenance of cell turgor during volume expansion in rapidly growing cells. It mediates rapid entry or exit of water in response to abrupt changes in osmolarity. The protein is Aquaporin Z of Escherichia coli O157:H7.